We begin with the raw amino-acid sequence, 215 residues long: Large ribosomal subunit protein uL3 (215 aa).

Gln-156 is modified (N5-methylglutamine).

It belongs to the universal ribosomal protein uL3 family. Part of the 50S ribosomal subunit. Forms a cluster with proteins L14 and L19. Post-translationally, methylated by PrmB.

Its function is as follows. One of the primary rRNA binding proteins, it binds directly near the 3'-end of the 23S rRNA, where it nucleates assembly of the 50S subunit. The sequence is that of Large ribosomal subunit protein uL3 from Xylella fastidiosa (strain 9a5c).